Here is a 1505-residue protein sequence, read N- to C-terminus: Myosin-6 (1505 aa).

Positions 8–57 (SVGSFVWVEDPDEAWIDGEVVQVNGDEIKVLCTSGKHVVTKISNAYPKDV) constitute a Myosin N-terminal SH3-like domain. The region spanning 62–731 (SGVDDMTRLA…QMADLDTRRT (670 aa)) is the Myosin motor domain. ATP contacts are provided by residues 156 to 163 (GESGAGKT) and 209 to 217 (NNNSSRFGK). Actin-binding stretches follow at residues 495–529 (LIEK…YQTF), 531–554 (THKR…AGDV), 589–612 (FPPM…KQQL), and 612–634 (LVSL…KPNN). IQ domains lie at 734-763 (LGRS…SAKQ), 757-786 (LRNS…EAAA), 782-811 (REAA…AAVS), 805-834 (LYSA…TKAA), 830-859 (QTKA…AAIT), and 853-882 (LKKA…AARE). Positions 883-1048 (TGALQAAKNK…AEKKIMHQQT (166 aa)) form a coiled coil. Positions 1148-1452 (DRLIQMIGSA…ISSMRTLMTE (305 aa)) constitute a Dilute domain.

This sequence belongs to the TRAFAC class myosin-kinesin ATPase superfamily. Myosin family. Plant myosin class XI subfamily. In terms of assembly, homodimer. Interacts with RABC2A and RABD1. As to expression, expressed in flowers, leaves, roots and stems.

It is found in the cytoplasm. Functionally, myosin heavy chain that is required for the cell cycle-regulated transport of various organelles and proteins for their segregation. Functions by binding with its tail domain to receptor proteins on organelles and exerting force with its N-terminal motor domain against actin filaments, thereby transporting its cargo along polarized actin cables. Involved in the tip growth of root hair cells. Plays a major role in trafficking of Golgi stacks, mitochondria and peroxisomes during root hair development. Targets the peroxisome through an interaction with RABC2A. Required for development of pavement cells, trichomes, and stigmatic papillae. In Arabidopsis thaliana (Mouse-ear cress), this protein is Myosin-6 (XI-2).